The following is a 132-amino-acid chain: Small ribosomal subunit protein uS11 (132 aa).

Residues 1 to 21 are disordered; sequence MAAPKSAVRKPRRKDKKNIAV. Residues 7–16 are compositionally biased toward basic residues; sequence AVRKPRRKDK.

This sequence belongs to the universal ribosomal protein uS11 family. As to quaternary structure, part of the 30S ribosomal subunit. Interacts with proteins S7 and S18. Binds to IF-3.

In terms of biological role, located on the platform of the 30S subunit, it bridges several disparate RNA helices of the 16S rRNA. Forms part of the Shine-Dalgarno cleft in the 70S ribosome. The polypeptide is Small ribosomal subunit protein uS11 (Clavibacter sepedonicus (Clavibacter michiganensis subsp. sepedonicus)).